The sequence spans 478 residues: Allene oxide synthase 2 (478 aa).

Residues Lys88, His119, and Lys123 each contribute to the heme b site. Asn278 serves as a coordination point for (13S)-hydroperoxy-(9Z,11E,15Z)-octadecatrienoate. 2 residues coordinate heme b: Lys427 and Cys429.

The protein belongs to the cytochrome P450 family. Heme b is required as a cofactor. In terms of tissue distribution, weakly expressed in roots, shoots, leaves and flowers.

The enzyme catalyses (13S)-hydroperoxy-(9Z,11E,15Z)-octadecatrienoate = (9Z,13S,15Z)-12,13-epoxyoctadeca-9,11,15-trienoate + H2O. The protein operates within lipid metabolism; oxylipin biosynthesis. In terms of biological role, involved in the biosynthesis of jasmonic acid, a growth regulator that is implicated also as a signaling molecule in plant defense. Converts 13-hydroperoxylinolenic acid to 12,13-epoxylinolenic acid. This is Allene oxide synthase 2 (CYP74A2) from Oryza sativa subsp. japonica (Rice).